Consider the following 194-residue polypeptide: Imidazoleglycerol-phosphate dehydratase (194 aa).

This sequence belongs to the imidazoleglycerol-phosphate dehydratase family.

It localises to the cytoplasm. It carries out the reaction D-erythro-1-(imidazol-4-yl)glycerol 3-phosphate = 3-(imidazol-4-yl)-2-oxopropyl phosphate + H2O. It participates in amino-acid biosynthesis; L-histidine biosynthesis; L-histidine from 5-phospho-alpha-D-ribose 1-diphosphate: step 6/9. In Halalkalibacterium halodurans (strain ATCC BAA-125 / DSM 18197 / FERM 7344 / JCM 9153 / C-125) (Bacillus halodurans), this protein is Imidazoleglycerol-phosphate dehydratase.